The primary structure comprises 356 residues: Dihydroorotate dehydrogenase (quinone) (356 aa).

FMN contacts are provided by residues 67–71 (AGFDK) and Thr-91. Position 71 (Lys-71) interacts with substrate. 116–120 (NRMGF) provides a ligand contact to substrate. Residues Asn-153 and Asn-186 each coordinate FMN. Residue Asn-186 coordinates substrate. Catalysis depends on Ser-189, which acts as the Nucleophile. Asn-191 is a substrate binding site. The FMN site is built by Lys-228 and Thr-256. Residue 257 to 258 (NT) participates in substrate binding. FMN contacts are provided by residues Gly-282, Gly-311, and 332 to 333 (YT).

Belongs to the dihydroorotate dehydrogenase family. Type 2 subfamily. As to quaternary structure, monomer. The cofactor is FMN.

The protein resides in the cell membrane. The catalysed reaction is (S)-dihydroorotate + a quinone = orotate + a quinol. Its pathway is pyrimidine metabolism; UMP biosynthesis via de novo pathway; orotate from (S)-dihydroorotate (quinone route): step 1/1. Its function is as follows. Catalyzes the conversion of dihydroorotate to orotate with quinone as electron acceptor. This Pseudarthrobacter chlorophenolicus (strain ATCC 700700 / DSM 12829 / CIP 107037 / JCM 12360 / KCTC 9906 / NCIMB 13794 / A6) (Arthrobacter chlorophenolicus) protein is Dihydroorotate dehydrogenase (quinone).